The chain runs to 86 residues: Actinorhodin polyketide synthase acyl carrier protein (86 aa).

The region spanning 4–82 (LLTTDDLRRA…ELLDLINGAL (79 aa)) is the Carrier domain. Ser-42 bears the O-(pantetheine 4'-phosphoryl)serine mark.

In terms of processing, 4'-phosphopantetheine is transferred from CoA to a specific serine of the apo-ACP-like protein.

Its pathway is antibiotic biosynthesis; actinorhodin biosynthesis. Functionally, acyl carrier protein. The sequence is that of Actinorhodin polyketide synthase acyl carrier protein from Streptomyces coelicolor (strain ATCC BAA-471 / A3(2) / M145).